The chain runs to 496 residues: MLO-like protein 15 (496 aa).

Residues 1 to 9 (MAGGGTTLE) are Extracellular-facing. Residues 10-30 (YTPTWVVALVCSVIVSISFAV) traverse the membrane as a helical segment. Residues 31-59 (ERLIHRAGKHFKNNDQKQLFGALQKIKEE) are Cytoplasmic-facing. The helical transmembrane segment at 60-80 (LMLVGFISLLLSVGQSKIAKI) threads the bilayer. At 81–147 (CISKELSEKF…MSLSALHELH (67 aa)) the chain is on the extracellular side. Residues 148–168 (IFIFVLAVAHIIFCLLTIVFG) form a helical membrane-spanning segment. Topologically, residues 169-269 (TMKIKQWKKW…KYLMRALNSD (101 aa)) are cytoplasmic. The chain crosses the membrane as a helical span at residues 270–290 (FKKVVGISWYLWVFVVLFLLL). Asn291 is a topological domain (extracellular). Residues 292–312 (IVAWHVYFWLAFIPLILLLAV) form a helical membrane-spanning segment. The Cytoplasmic portion of the chain corresponds to 313-355 (GTKLEHIITDLAHEVAEKHIAVEGDLVVRPSDDLFWFQSPRLV). Residues 356–376 (LFLIHFILFQNSFEIAYFFFI) traverse the membrane as a helical segment. Topologically, residues 377 to 397 (LFQFGWDSCIMDHVKFVIPRL) are extracellular. A helical membrane pass occupies residues 398–418 (VIGVIIQLLCSYSTLPLYALV). The Cytoplasmic segment spans residues 419–496 (TQMGSSFKGA…KEKSEIAHHD (78 aa)). The segment at 432 to 453 (EQTQEHLVGWAKMAKRGVKKGA) is calmodulin-binding. Residues 454–496 (TQVGTSHDATSPRPSIQLNSLLGKGSSQQNQNPKEKSEIAHHD) form a disordered region. The segment covering 455–485 (QVGTSHDATSPRPSIQLNSLLGKGSSQQNQN) has biased composition (polar residues). A compositionally biased stretch (basic and acidic residues) spans 486–496 (PKEKSEIAHHD).

It belongs to the MLO family.

It is found in the membrane. In terms of biological role, may be involved in modulation of pathogen defense and leaf cell death. Activity seems to be regulated by Ca(2+)-dependent calmodulin binding and seems not to require heterotrimeric G proteins. This chain is MLO-like protein 15 (MLO15), found in Arabidopsis thaliana (Mouse-ear cress).